A 303-amino-acid chain; its full sequence is Tobamovirus multiplication protein 3 (303 aa).

Residues 1–48 (MRIGGVEVTKFASEMMSSSSSSAVEMLNLKEASNWWSDVNESPIWQDR) are Extracellular-facing. The chain crosses the membrane as a helical span at residues 49-69 (IFHVLAVLYGIVSLVAVIQLV). Topologically, residues 70–82 (RIQLRVPEYGWTT) are cytoplasmic. The chain crosses the membrane as a helical span at residues 83 to 103 (QKVFHFLNFVVNGVRAVVFVF). The Extracellular portion of the chain corresponds to 104–117 (RRNVQFMQPEILQH). The chain crosses the membrane as a helical span at residues 118 to 138 (ILLDIPSLAFFTTYALLVLFW). Topologically, residues 139-156 (AEIYYQARAVSTDGLRPS) are cytoplasmic. The chain crosses the membrane as a helical span at residues 157–177 (FFTINAVVYVVQIALWLVLWW). Over 178–183 (KPVRVM) the chain is Extracellular. Residues 184-204 (VILSKMFFAGVSLFAALGFLL) traverse the membrane as a helical segment. Over 205–232 (YGGRLFLMLQRFPVESKGRRKKLQEVGY) the chain is Cytoplasmic. A helical transmembrane segment spans residues 233–253 (VTTICFTCFLIRCIMMCFAAF). The Extracellular segment spans residues 254–265 (DEGANLDVLDHP). A helical membrane pass occupies residues 266–286 (ILNFIYYLLVEILPSSLVLFI). The Cytoplasmic portion of the chain corresponds to 287-303 (LRKLPPKRGITQYHQIR).

The protein belongs to the plant tobamovirus multiplication TOM1 protein family. As to quaternary structure, constituent of tobamovirus replication complex. Interacts with the helicase domain of tobamovirus-encoded replication proteins.

It localises to the vacuole membrane. Contributes to the intracellular multiplication of tobamoviruses, probably being a membrane anchor promoting the formation of the replication complex. The protein is Tobamovirus multiplication protein 3 (TOM3) of Arabidopsis thaliana (Mouse-ear cress).